The primary structure comprises 678 residues: MASDSLKKRKPKVNRNEDVKRGRHEDQEGRYYSEEAEVDVRDPKEDYQLYKDTCLDLQRLMSEIQELKSKGSRDSALEIEEKKVQSCVHFMTLKKLNRLAHIRLKKARDQTHEAKQKVDAYHLQLQNLLYEVMHLQKEITKCLEFKSKHEEIELVSVEEFYSKAPVAISKPEITSTDPHQQTLSRLDWELEQRKRLAEKYKECLASKEKILKEIEIKKEYLNSLQPQLNSIMQASLPVQEYLSMPFDCMHKQYETARHLPAPLYVLFVQASAYSQACDRKLVVTIEGNVEEARALFKPPEDSQDDESDSDAEEEQTTKRRRPTLGVQLDDKRKEMLKRHPLCVTITLKCKEGSTLTLTFYFLMNLNILTVKVKILPAFELSTAISAGDLLNPDLMLSCLYQGDDGKTTPNPANQYQFDKIGILSLSDYISELGHPYIWVQAMGGLHFPTDQPQPAVVADNALSANHMEKTIKLLRTRLLSRLSLHRQFASLEHGSIPVSLECQSFFPAKVISRLTKWNVITYEDYLALPYTKDVIECGLAKETDQYFNLLIERGTAKLNGVVVLNPGYCAVPPVFSLCLNWKGERLSSNDDNIRVMESEVNVYYKELCGPPPGFQLLTNQIQRLCMLLDVYLETERHDNSVEGPHEFPPEKICLRLLRGPSRTKPFKYNYPQGFFSHR.

Disordered regions lie at residues 1–35 and 294–329; these read MASD…YSEE and ALFK…VQLD. The Nuclear localization signal signature appears at 7 to 10; the sequence is KKRK. Residues 14–35 show a composition bias toward basic and acidic residues; it reads NRNEDVKRGRHEDQEGRYYSEE. A compositionally biased stretch (acidic residues) spans 301-314; it reads DSQDDESDSDAEEE.

It belongs to the THOC5 family. Component of the THO subcomplex, which is composed of thoc1, thoc2, thoc3, thoc5, thoc6 and thoc7. Component of the transcription/export (TREX) complex at least composed of alyref/thoc4, ddx39b, sarnp/cip29, chtop and the THO subcomplex. Interacts with thoc7.

The protein localises to the nucleus. It is found in the nucleus speckle. The protein resides in the cytoplasm. Component of the THO subcomplex of the TREX complex which is thought to couple mRNA transcription, processing and nuclear export, and which specifically associates with spliced mRNA and not with unspliced pre-mRNA. Plays a key structural role in the oligomerization of the THO-ddx39b complex. TREX is recruited to spliced mRNAs by a transcription-independent mechanism, binds to mRNA upstream of the exon-junction complex (EJC) and is recruited in a splicing- and cap-dependent manner to a region near the 5' end of the mRNA where it functions in mRNA export to the cytoplasm via the TAP/NXF1 pathway. May be involved in cell differentiation. The chain is THO complex subunit 5 homolog A (thoc5-a) from Xenopus laevis (African clawed frog).